The primary structure comprises 919 residues: Lipoxygenase 3, chloroplastic (919 aa).

The N-terminal 52 residues, 1–52, are a transit peptide targeting the chloroplast; sequence MALAKELMGYPLITERSSLVSSASHFKKRTQSTQFSINPFDRRPRKTKSGVV. Residues 86-222 enclose the PLAT domain; that stretch reads VRAVVTVRNK…DHPDKRIFFT (137 aa). Positions 225–919 constitute a Lipoxygenase domain; sequence PYLPNETPSG…CRGVPNSVSI (695 aa). The disordered stretch occupies residues 272–310; it reads PDKSSELSRPKLGGKEVPYPRRCRTGRQSTVSDKDAESR. Residues His578, His583, His770, Asn774, and Ile919 each contribute to the Fe cation site.

It belongs to the lipoxygenase family. Requires Fe cation as cofactor. As to expression, expressed in roots and leaves.

The protein localises to the plastid. It is found in the chloroplast. The enzyme catalyses (9Z,12Z)-octadecadienoate + O2 = (13S)-hydroperoxy-(9Z,11E)-octadecadienoate. The catalysed reaction is (9Z,12Z,15Z)-octadecatrienoate + O2 = (13S)-hydroperoxy-(9Z,11E,15Z)-octadecatrienoate. It participates in lipid metabolism; oxylipin biosynthesis. Functionally, 13S-lipoxygenase that can use linolenic acid as substrates. Plant lipoxygenases may be involved in a number of diverse aspects of plant physiology including growth and development, pest resistance, and senescence or responses to wounding. Catalyzes the hydroperoxidation of lipids containing a cis,cis-1,4-pentadiene structure. In Arabidopsis thaliana (Mouse-ear cress), this protein is Lipoxygenase 3, chloroplastic (LOX3).